The primary structure comprises 177 residues: Large ribosomal subunit protein uL6 (177 aa).

The protein belongs to the universal ribosomal protein uL6 family. In terms of assembly, part of the 50S ribosomal subunit.

In terms of biological role, this protein binds to the 23S rRNA, and is important in its secondary structure. It is located near the subunit interface in the base of the L7/L12 stalk, and near the tRNA binding site of the peptidyltransferase center. The chain is Large ribosomal subunit protein uL6 from Rhodospirillum rubrum (strain ATCC 11170 / ATH 1.1.1 / DSM 467 / LMG 4362 / NCIMB 8255 / S1).